The primary structure comprises 200 residues: Imidazole glycerol phosphate synthase subunit HisH (200 aa).

Residues 3-200 (DVALIDAGGA…LRNFLEMSFP (198 aa)) form the Glutamine amidotransferase type-1 domain. Cys78 acts as the Nucleophile in catalysis. Residues His179 and Glu181 contribute to the active site.

As to quaternary structure, heterodimer of HisH and HisF.

The protein localises to the cytoplasm. The catalysed reaction is 5-[(5-phospho-1-deoxy-D-ribulos-1-ylimino)methylamino]-1-(5-phospho-beta-D-ribosyl)imidazole-4-carboxamide + L-glutamine = D-erythro-1-(imidazol-4-yl)glycerol 3-phosphate + 5-amino-1-(5-phospho-beta-D-ribosyl)imidazole-4-carboxamide + L-glutamate + H(+). It carries out the reaction L-glutamine + H2O = L-glutamate + NH4(+). It participates in amino-acid biosynthesis; L-histidine biosynthesis; L-histidine from 5-phospho-alpha-D-ribose 1-diphosphate: step 5/9. IGPS catalyzes the conversion of PRFAR and glutamine to IGP, AICAR and glutamate. The HisH subunit catalyzes the hydrolysis of glutamine to glutamate and ammonia as part of the synthesis of IGP and AICAR. The resulting ammonia molecule is channeled to the active site of HisF. This is Imidazole glycerol phosphate synthase subunit HisH from Xanthomonas axonopodis pv. citri (strain 306).